The primary structure comprises 367 residues: Cyclin-Y-like protein 1 (367 aa).

3 positions are modified to phosphoserine: Ser-73, Ser-111, and Ser-118. Residues 186 to 291 (EYFKHDPEHK…FLELLQFNIN (106 aa)) enclose the Cyclin N-terminal domain. Phosphoserine is present on Ser-352.

Belongs to the cyclin family. Cyclin Y subfamily. In terms of assembly, interacts with CDK16; this interaction mutually increases the stability of CDK16 and CCNYL1 and increases the kinase activity of CDK16. In terms of tissue distribution, highly expressed in the testis. Largely restricted to germ cells in the testis.

It is found in the cell membrane. In terms of biological role, key regulator of Wnt signaling implicated in various biological processes including male fertility, embryonic neurogenesis and cortex development. Activates the cyclin-dependent kinase CDK16, and promotes sperm maturation. The chain is Cyclin-Y-like protein 1 from Mus musculus (Mouse).